We begin with the raw amino-acid sequence, 61 residues long: Metallothionein-1B (61 aa).

Residues 1-29 (MDPNCSCTTGGSCACAGSCKCKECKCTSC) are beta. A divalent metal cation is bound by residues Cys-5, Cys-7, Cys-13, Cys-15, Cys-19, Cys-21, Cys-24, Cys-26, Cys-29, Cys-33, Cys-34, Cys-36, Cys-37, Cys-41, Cys-44, Cys-48, Cys-50, Cys-57, Cys-59, and Cys-60. The segment at 30 to 61 (KKCCCSCCPVGCAKCAQGCVCKGSSEKCRCCA) is alpha.

It belongs to the metallothionein superfamily. Type 1 family. In terms of assembly, monomer.

In terms of biological role, metallothioneins have a high content of cysteine residues that bind various heavy metals; these proteins are transcriptionally regulated by both heavy metals and glucocorticoids. In Homo sapiens (Human), this protein is Metallothionein-1B (MT1B).